Consider the following 825-residue polypeptide: Trimethylamine-N-oxide reductase (825 aa).

Residues 1-40 (MKKNNVNEQRRDFLKKTSLGVAGSALSGGMVGVVSKSAVA) constitute a signal peptide (tat-type signal). Serine 187 contributes to the Mo-bis(molybdopterin guanine dinucleotide) binding site.

It belongs to the prokaryotic molybdopterin-containing oxidoreductase family. It depends on Mo-bis(molybdopterin guanine dinucleotide) as a cofactor. Predicted to be exported by the Tat system. The position of the signal peptide cleavage has not been experimentally proven.

The protein resides in the periplasm. The enzyme catalyses trimethylamine + 2 Fe(III)-[cytochrome c] + H2O = trimethylamine N-oxide + 2 Fe(II)-[cytochrome c] + 3 H(+). Functionally, reduces trimethylamine-N-oxide (TMAO) into trimethylamine; an anaerobic reaction coupled to energy-yielding reactions. This chain is Trimethylamine-N-oxide reductase (torZ), found in Haemophilus influenzae (strain ATCC 51907 / DSM 11121 / KW20 / Rd).